Reading from the N-terminus, the 207-residue chain is Protein lin-7 homolog B (207 aa).

Positions 1 to 13 (MAALVEPLGLERD) match the Kinase interacting site motif. The L27 domain occupies 10–65 (LERDVSRAVELLERLQRSGELPPQKLQALQRVLQSRFCSAIREVYEQLYDTLDITG). One can recognise a PDZ domain in the interval 93-175 (VVELPKTDEG…SVKLVVRYTP (83 aa)). Residues 187-207 (KMRSARRRQQHHSYSSLESRG) form a disordered region. A compositionally biased stretch (polar residues) spans 198-207 (HSYSSLESRG).

It belongs to the lin-7 family. Forms two exclusive ternary complexes with CASK and CASKIN1. The brain-specific heterotrimeric complex (LIN-10-LIN-2-LIN-7 complex) composed of at least APBA1, CASK, and LIN7, associates with the motor protein KIF17 to transport vesicles along microtubules. Forms a heterotrimeric complex composed of MMP5, LIN7B and PATJ; the N-terminal L27 domain of PALS1 interacts with the L27 domain of PATJ and the C-terminal L27 domain of PALS1 interacts with the L27 domain of LIN7B. Forms a heterotrimeric complex with DLG1 and CASK via their L27 domains. Interacts with DLG4 and GRIN2B as well as CDH1 and CTNNB1, the channels KCNJ12/Kir2.2, KCNJ4/Kir2.3 and probably KCNJ2/Kir2.1 and SLC6A12/BGT-1 via its PDZ domain. The association of LIN7A with cadherin and beta-catenin is calcium-dependent, occurs at synaptic junctions and requires the actin cytoskeleton. Interacts with EGFR, ERBB2, ERBB3 and ERBB4 with both PDZ and KID domains. Associates with KIF17 via APBA1. Interacts with ASIC3. Interacts with TOPK. Interacts with RTKN. Interacts with APBA1. Interacts with MPP7. Interacts with DLG2. Interacts with DLG3. As to expression, expressed only in brain.

It is found in the cell membrane. The protein resides in the basolateral cell membrane. Its subcellular location is the cell junction. The protein localises to the postsynaptic density membrane. It localises to the tight junction. In terms of biological role, plays a role in establishing and maintaining the asymmetric distribution of channels and receptors at the plasma membrane of polarized cells. Forms membrane-associated multiprotein complexes that may regulate delivery and recycling of proteins to the correct membrane domains. The tripartite complex composed of LIN7 (LIN7A, LIN7B or LIN7C), CASK and APBA1 associates with the motor protein KIF17 to transport vesicles containing N-methyl-D-aspartate (NMDA) receptor subunit NR2B along microtubules. This complex may have the potential to couple synaptic vesicle exocytosis to cell adhesion in brain. Ensures the proper localization of GRIN2B (subunit 2B of the NMDA receptor) to neuronal postsynaptic density and may function in localizing synaptic vesicles at synapses where it is recruited by beta-catenin and cadherin. Required to localize Kir2 channels, GABA transporter (SLC6A12) and EGFR/ERBB1, ERBB2, ERBB3 and ERBB4 to the basolateral membrane of epithelial cells. May increase the amplitude of ASIC3 acid-evoked currents by stabilizing the channel at the cell surface. In Rattus norvegicus (Rat), this protein is Protein lin-7 homolog B (Lin7b).